A 1943-amino-acid polypeptide reads, in one-letter code: Sickle tail protein homolog (1943 aa).

2 disordered regions span residues 1–79 and 112–177; these read MEEN…KEIL and QERL…RSTN. Residues 38–47 are compositionally biased toward basic and acidic residues; sequence AECRRTKERL. Over residues 48–62 the composition is skewed to polar residues; that stretch reads SNGNSRGSVSKSSRN. Phosphoserine is present on Ser169. Tyr244 carries the phosphotyrosine modification. Residues 290-331 form a disordered region; that stretch reads ARGDGPGAPRPGSTAHPPHAIPNSPPSTPVPHSMPPSPSRIP. Residues 308–328 are compositionally biased toward pro residues; sequence HAIPNSPPSTPVPHSMPPSPS. Residue Ser357 is glycosylated (O-linked (GlcNAc) serine). Phosphoserine is present on residues Ser361 and Ser365. Tyr393 carries the post-translational modification Phosphotyrosine. The tract at residues 456-476 is disordered; it reads RKYPDSHLPTLGSKTPPASPH. Thr470 carries the phosphothreonine modification. Ser474 and Ser526 each carry phosphoserine. Coiled-coil stretches lie at residues 557–581 and 644–685; these read RETR…QSAL and MSLL…ELEI. Ser809 carries the post-translational modification Phosphoserine. A disordered region spans residues 848-874; it reads VLKSQEEAAHTSGQPFHSTGAPGDAKS. The stretch at 957–985 forms a coiled coil; that stretch reads SAKNRAVSIEKAEKKWEEKRQNLDHYNGK. Disordered regions lie at residues 1003–1230, 1305–1329, and 1352–1377; these read PNLE…SDAS, KTKE…TESS, and PKEA…TEEN. Phosphoserine is present on residues Ser1027, Ser1030, Ser1033, and Ser1044. Positions 1044 to 1053 are enriched in pro residues; sequence SPPPPPPPPR. 3 stretches are compositionally biased toward basic and acidic residues: residues 1155 to 1167, 1174 to 1192, and 1305 to 1318; these read EPSR…KDTR, PKEK…KSDV, and KTKE…DKCH. The span at 1368-1377 shows a compositional bias: polar residues; sequence SSSSSPTEEN. At Ser1461 the chain carries Phosphoserine. The stretch at 1464-1490 forms a coiled coil; the sequence is FEECDEELERMMMEEKIEEEEEEENGD. 3 disordered regions span residues 1481–1572, 1606–1660, and 1677–1943; these read EEEE…PKKK, EEEE…EIRK, and ENTI…KETS. Polar residues-rich tracts occupy residues 1491-1501 and 1512-1533; these read SVVQNNNTSQM and RTGQ…TRNP. Basic and acidic residues-rich tracts occupy residues 1539–1548 and 1612–1625; these read NRTELNKFSH and GTLK…RFEI. The span at 1643–1653 shows a compositional bias: polar residues; sequence QPSIESTSPIS. Residues 1656–1686 are a coiled coil; it reads DEIRKNTYRTLDSLEQTIKQLENTISEMSPK. 2 stretches are compositionally biased toward polar residues: residues 1691-1706 and 1731-1747; these read TSCS…SSHI and IPSA…QTSR. At Ser1739 the chain carries Phosphoserine. The span at 1763 to 1775 shows a compositional bias: basic and acidic residues; that stretch reads KPGKQSKLQDPRQ. The span at 1806 to 1825 shows a compositional bias: low complexity; that stretch reads SPSSGKSSSLPSSSGDSSNL. 2 stretches are compositionally biased toward polar residues: residues 1834-1843 and 1853-1869; these read SIASNPLSPQ and LIPS…SLTH. A Phosphoserine modification is found at Ser1841. Residues 1892–1905 show a composition bias toward low complexity; it reads SFSSSPPSPASSVS. A phosphoserine mark is found at Ser1896, Ser1899, and Ser1902. Polar residues predominate over residues 1906–1943; that stretch reads LNQGAKGTRTIHTPSLTSYKAQNGSSSKATPSTAKETS.

Interacts with CPNE4 (via VWFA domain).

It localises to the cytoplasm. The protein localises to the cytoskeleton. It is found in the microtubule organizing center. The protein resides in the centrosome. Its function is as follows. Required for normal development of intervertebral disks. This chain is Sickle tail protein homolog (KIAA1217), found in Homo sapiens (Human).